We begin with the raw amino-acid sequence, 33 residues long: Kappa-theraphotoxin-Pg2a (33 aa).

3 disulfide bridges follow: Cys2–Cys16, Cys9–Cys21, and Cys15–Cys28.

In terms of tissue distribution, expressed by the venom gland.

The protein resides in the secreted. Gating modifier of Kv2.1/KCNB1 channels. This is Kappa-theraphotoxin-Pg2a from Chilobrachys guangxiensis (Chinese earth tiger tarantula).